The sequence spans 572 residues: MRTSQYLLSTLKETPADAEVISHQLMLRAGMIRKLASGLYTWLPTGLRVLKKVENIVREEMNNAGAIEVSMPVVQPADLWQESGRWEQYGPELLRFVDRGERPFVLGPTHEEVITDLVRNELSSYKQLPLNFFQIQTKFRDEVRPRFGVMRSREFLMKDAYSFHTSQESLQETYDAMYAAYSRIFSRMGLDFRAVQADTGSIGGNASHEFQVLAQSGEDDIVFSDVSDYAANIELAEAIAPQTPRAAATQEMTLVDTPNAKTIAELVEQFNLPIEKTVKTLLVKAVKDSKSPLVALLVRGDHELNEVKAEKLPHVASPLTFATEEEIRAVINAGPGSLGPVNMPIPVIIDRTVAAMSDFAAGANIDGKHYFGINWDRDVATPVVADIRNVVAGDPSPDGQGTLLIKRGIEVGHIFQLGTKYSEALKASVQGEDGRNQILTMGCYGIGVTRVVAAAIEQNFDERGIVWPDAIAPFQVAILPMNMHKSFRVQELAEKLYSELRAQGIEVLMDDRKERPGVMFADMELIGIPHTIVIGDRNLDNDDIEYKYRRSGEKSLIKTGDIVDYLVKAIKG.

It belongs to the class-II aminoacyl-tRNA synthetase family. ProS type 1 subfamily. Homodimer.

The protein resides in the cytoplasm. It carries out the reaction tRNA(Pro) + L-proline + ATP = L-prolyl-tRNA(Pro) + AMP + diphosphate. Catalyzes the attachment of proline to tRNA(Pro) in a two-step reaction: proline is first activated by ATP to form Pro-AMP and then transferred to the acceptor end of tRNA(Pro). As ProRS can inadvertently accommodate and process non-cognate amino acids such as alanine and cysteine, to avoid such errors it has two additional distinct editing activities against alanine. One activity is designated as 'pretransfer' editing and involves the tRNA(Pro)-independent hydrolysis of activated Ala-AMP. The other activity is designated 'posttransfer' editing and involves deacylation of mischarged Ala-tRNA(Pro). The misacylated Cys-tRNA(Pro) is not edited by ProRS. This Salmonella dublin (strain CT_02021853) protein is Proline--tRNA ligase.